Reading from the N-terminus, the 132-residue chain is Small ribosomal subunit protein uS8 (132 aa).

It belongs to the universal ribosomal protein uS8 family. Part of the 30S ribosomal subunit. Contacts proteins S5 and S12.

In terms of biological role, one of the primary rRNA binding proteins, it binds directly to 16S rRNA central domain where it helps coordinate assembly of the platform of the 30S subunit. This chain is Small ribosomal subunit protein uS8, found in Streptococcus mutans serotype c (strain ATCC 700610 / UA159).